We begin with the raw amino-acid sequence, 370 residues long: Lysophosphatidic acid receptor 4 (370 aa).

The Extracellular segment spans residues 1 to 43; sequence MGDRRFIDFQFQDLNSSLRPRLGNATANNTCIVDDSFKYNLNG. N-linked (GlcNAc...) asparagine glycans are attached at residues asparagine 15, asparagine 24, and asparagine 28. Residues 44–64 traverse the membrane as a helical segment; that stretch reads AVYSVVFILGLITNSASLFVF. The Cytoplasmic segment spans residues 65-73; the sequence is CFRMKMRSE. The chain crosses the membrane as a helical span at residues 74 to 94; sequence TAIFITNLALSDLLFVCTLPF. Residues 95-112 lie on the Extracellular side of the membrane; it reads KIFYNFNRHWPFGDTLCK. An intrachain disulfide couples cysteine 111 to cysteine 188. Residues 113-133 form a helical membrane-spanning segment; that stretch reads ISGTAFLTNIYGSMLFLTCIS. The Cytoplasmic segment spans residues 134–155; that stretch reads VDRFLAIVYPFRSRTIRTRRNS. Residues 156 to 176 form a helical membrane-spanning segment; it reads AIVCAGVWILVLSGGISASLF. The Extracellular portion of the chain corresponds to 177 to 203; it reads STTNVNNATTTCFEGFSKRVWKTYLSK. Asparagine 183 carries N-linked (GlcNAc...) asparagine glycosylation. The helical transmembrane segment at 204–224 threads the bilayer; sequence ITIFIEVVGFIIPLILNVSCS. The Cytoplasmic portion of the chain corresponds to 225 to 254; it reads SVVLRTLRKPATLSQIGTNKKKVLKMITVH. Residues 255–275 form a helical membrane-spanning segment; sequence MAVFVVCFVPYNSVLFLYALV. Residues 276 to 294 are Extracellular-facing; it reads RSQAITNCLLERFAKIMYP. Residues 295–315 traverse the membrane as a helical segment; sequence ITLCLATLNCCFDPFIYYFTL. Residues 316–370 lie on the Cytoplasmic side of the membrane; sequence ESFQKSFYINTHIRMESLFKTETPLTPKPSLPAIQEEVSDQTTNNGGELMLESTF.

It belongs to the G-protein coupled receptor 1 family.

It is found in the cell membrane. Receptor for lysophosphatidic acid (LPA), a mediator of diverse cellular activities. Transduces a signal by increasing the intracellular calcium ions and by stimulating adenylyl cyclase activity. The rank order of potency for agonists of this receptor is 1-oleoyl- &gt; 1-stearoyl- &gt; 1-palmitoyl- &gt; 1-myristoyl- &gt; 1-alkyl- &gt; 1-alkenyl-LPA. The sequence is that of Lysophosphatidic acid receptor 4 (Lpar4) from Mus musculus (Mouse).